Reading from the N-terminus, the 878-residue chain is Probable LRR receptor-like serine/threonine-protein kinase MEE39 (878 aa).

Positions 1 to 25 (MKNLCWVFLSLFWFGVFLIIRFAEG) are cleaved as a signal peptide. At 26–514 (QNQEGFISLD…IDKPKKKVAV (489 aa)) the chain is on the extracellular side. 8 N-linked (GlcNAc...) asparagine glycosylation sites follow: N183, N203, N235, N290, N404, N418, N445, and N466. LRR repeat units lie at residues 413-436 (RIIS…QNLA), 437-458 (HLES…FLAT), and 461-483 (SLLV…LRDR). A helical transmembrane segment spans residues 515-535 (KVVAPVASIAAIVVVILLFVF). The Cytoplasmic portion of the chain corresponds to 536–878 (KKKMSSRNKP…FDTDVKPKAR (343 aa)). T557 carries the phosphothreonine modification. The Protein kinase domain maps to 566-840 (KNLQRPLGEG…QVIINLKECL (275 aa)). ATP is bound by residues 572 to 580 (LGEGGFGVV) and K594. Y639 is modified (phosphotyrosine). Catalysis depends on D691, which acts as the Proton acceptor. S726 is subject to Phosphoserine. Phosphothreonine is present on residues T727 and T732. Phosphotyrosine is present on Y740. The segment covering 849–869 (RNNQNMDSGHSSDQLNVTVTF) has biased composition (polar residues). Residues 849–878 (RNNQNMDSGHSSDQLNVTVTFDTDVKPKAR) are disordered.

Belongs to the protein kinase superfamily. Ser/Thr protein kinase family.

It localises to the membrane. It carries out the reaction L-seryl-[protein] + ATP = O-phospho-L-seryl-[protein] + ADP + H(+). The enzyme catalyses L-threonyl-[protein] + ATP = O-phospho-L-threonyl-[protein] + ADP + H(+). Its function is as follows. Receptor-like serine/threonine-kinase required during the endosperm development in seeds. The polypeptide is Probable LRR receptor-like serine/threonine-protein kinase MEE39 (MEE39) (Arabidopsis thaliana (Mouse-ear cress)).